Here is an 839-residue protein sequence, read N- to C-terminus: Autophagy-related protein 9A (839 aa).

Positions 1–20 (MAQFDTEYQRLEASYSDSPP) are disordered. N-acetylalanine is present on Ala-2. Over 2 to 61 (AQFDTEYQRLEASYSDSPPGEEDLLVHVAEGSKSPWHHIENLDLFFSRVYNLHQKNGFTC) the chain is Cytoplasmic. The short motif at 8 to 11 (YQRL) is the Tyrosine-based sorting signal element. Residues Ser-14, Ser-16, and Ser-18 each carry the phosphoserine modification. Residues 62–84 (MLIGEIFELMQFLFVVAFTTFLV) form a helical membrane-spanning segment. The Lumenal segment spans residues 85-128 (SCVDYDILFANKMVNHSLHPTEPVKVTLPDAFLPAQVCSARIQE). Asn-99 carries an N-linked (GlcNAc...) asparagine glycan. Residues 129 to 154 (NGSLITILVIAGVFWIHRLIKFIYNI) traverse the membrane as a helical segment. The Cytoplasmic segment spans residues 155-290 (CCYWEIHSFY…ELAQRLSNRI (136 aa)). The stretch at 291 to 301 (LWIGIANFLLC) is an intramembrane region. Residues 302 to 319 (PLILIWQILYAFFSYAEV) are Cytoplasmic-facing. Residues 320 to 328 (LKREPGALG) lie within the membrane without spanning it. Over 329–371 (ARCWSLYGRCYLRHFNELEHELQSRLNRGYKPASKYMNCFLSP) the chain is Cytoplasmic. A helical membrane pass occupies residues 372–397 (LLTLLAKNGAFFAGSILAVLIALTIY). Topologically, residues 398–406 (DEDVLAVEH) are lumenal. A helical transmembrane segment spans residues 407-424 (VLTTVTLLGVTVTVCRSF). The Cytoplasmic segment spans residues 425–470 (IPDQHMVFCPEQLLRVILAHIHYMPDHWQGNAHRSQTRDEFAQLFQ). Residues 471–480 (YKAVFILEEL) lie within the membrane without spanning it. The Cytoplasmic segment spans residues 481-483 (LSP). The stretch at 484–492 (IVTPLILIF) is an intramembrane region. The Cytoplasmic portion of the chain corresponds to 493–839 (CLRPRALEII…DELPPQVHKV (347 aa)). Phosphoserine occurs at positions 656, 735, 738, 741, and 828. 2 disordered regions span residues 656 to 686 (SPLQ…SSGS) and 717 to 839 (HKQQ…VHKV). Residues 724–736 (EPERHVWHRRESD) are compositionally biased toward basic and acidic residues. Composition is skewed to acidic residues over residues 737–747 (ESGESAPDEGG) and 823–832 (VPEEGSEDEL).

Belongs to the ATG9 family. As to quaternary structure, homotrimer; forms a homotrimer with a central pore that forms a path between the two membrane leaflets. Interacts (via cytoplasmic its C-terminus) with ATG2A. Interacts with SUPT20H. Interacts (via the tyrosine-based sorting signal motif) with AP4M1; promoting association with the AP-4 complex. Interacts with ARFIP1 and ARFIP2. Interacts with PI4K2A and PI4KB. Interacts with ATG4A; the interaction is direct and promotes ATG9A trafficking. Post-translationally, ufmylated in a DDRGK1 dependent manner.

It localises to the preautophagosomal structure membrane. Its subcellular location is the cytoplasmic vesicle. The protein resides in the autophagosome membrane. It is found in the golgi apparatus. The protein localises to the trans-Golgi network membrane. It localises to the late endosome membrane. Its subcellular location is the recycling endosome membrane. The protein resides in the endoplasmic reticulum membrane. It is found in the mitochondrion membrane. It catalyses the reaction a 1,2-diacyl-sn-glycero-3-phosphocholine(in) = a 1,2-diacyl-sn-glycero-3-phosphocholine(out). The catalysed reaction is a 1,2-diacyl-sn-glycero-3-phospho-L-serine(in) = a 1,2-diacyl-sn-glycero-3-phospho-L-serine(out). It carries out the reaction a 1,2-diacyl-sn-glycero-3-phosphoethanolamine(in) = a 1,2-diacyl-sn-glycero-3-phosphoethanolamine(out). Functionally, phospholipid scramblase involved in autophagy by mediating autophagosomal membrane expansion. Cycles between the preautophagosomal structure/phagophore assembly site (PAS) and the cytoplasmic vesicle pool and supplies membrane for the growing autophagosome. Lipid scramblase activity plays a key role in preautophagosomal structure/phagophore assembly by distributing the phospholipids that arrive through ATG2 (ATG2A or ATG2B) from the cytoplasmic to the luminal leaflet of the bilayer, thereby driving autophagosomal membrane expansion. Also required to supply phosphatidylinositol 4-phosphate to the autophagosome initiation site by recruiting the phosphatidylinositol 4-kinase beta (PI4KB) in a process dependent on ARFIP2, but not ARFIP1. In addition to autophagy, also plays a role in necrotic cell death. This chain is Autophagy-related protein 9A, found in Homo sapiens (Human).